The sequence spans 549 residues: Ankyrin repeat domain-containing protein SOWAHA (549 aa).

The first 17 residues, methionine 1–alanine 17, serve as a signal peptide directing secretion. Disordered stretches follow at residues lysine 82 to leucine 219 and glutamate 235 to leucine 256. Positions proline 203–proline 216 are enriched in low complexity. Positions glutamate 235 to serine 248 are enriched in basic and acidic residues. Serine 260 carries the phosphoserine modification. ANK repeat units follow at residues serine 345–alanine 374 and glycine 384–valine 414. The segment at proline 513 to threonine 549 is disordered.

The protein belongs to the SOWAH family.

This is Ankyrin repeat domain-containing protein SOWAHA (SOWAHA) from Homo sapiens (Human).